The primary structure comprises 229 residues: Urease accessory protein UreF (229 aa).

This sequence belongs to the UreF family. UreD, UreF and UreG form a complex that acts as a GTP-hydrolysis-dependent molecular chaperone, activating the urease apoprotein by helping to assemble the nickel containing metallocenter of UreC. The UreE protein probably delivers the nickel.

Its subcellular location is the cytoplasm. In terms of biological role, required for maturation of urease via the functional incorporation of the urease nickel metallocenter. This is Urease accessory protein UreF from Trichormus variabilis (strain ATCC 29413 / PCC 7937) (Anabaena variabilis).